Reading from the N-terminus, the 334-residue chain is Cathepsin R (334 aa).

The N-terminal stretch at 1–17 is a signal peptide; sequence MAAVVFIAFLYLGVASG. A propeptide spans 18-114 (activation peptide); it reads VPVLDSSLDA…SIMKREAGSI (97 aa). 2 disulfides stabilise this stretch: cysteine 136–cysteine 179 and cysteine 170–cysteine 212. Cysteine 139 is an active-site residue. Asparagine 269 carries N-linked (GlcNAc...) asparagine glycosylation. A disulfide bond links cysteine 270 and cysteine 323. Catalysis depends on residues histidine 277 and asparagine 301.

This sequence belongs to the peptidase C1 family. As to expression, placenta.

Its subcellular location is the lysosome. The polypeptide is Cathepsin R (Ctsr) (Mus musculus (Mouse)).